The following is a 367-amino-acid chain: Aminomethyltransferase (367 aa).

This sequence belongs to the GcvT family. In terms of assembly, the glycine cleavage system is composed of four proteins: P, T, L and H.

The enzyme catalyses N(6)-[(R)-S(8)-aminomethyldihydrolipoyl]-L-lysyl-[protein] + (6S)-5,6,7,8-tetrahydrofolate = N(6)-[(R)-dihydrolipoyl]-L-lysyl-[protein] + (6R)-5,10-methylene-5,6,7,8-tetrahydrofolate + NH4(+). The glycine cleavage system catalyzes the degradation of glycine. This is Aminomethyltransferase from Saccharopolyspora erythraea (strain ATCC 11635 / DSM 40517 / JCM 4748 / NBRC 13426 / NCIMB 8594 / NRRL 2338).